The chain runs to 147 residues: Putative pre-16S rRNA nuclease (147 aa).

Belongs to the YqgF nuclease family.

Its subcellular location is the cytoplasm. Functionally, could be a nuclease involved in processing of the 5'-end of pre-16S rRNA. This chain is Putative pre-16S rRNA nuclease, found in Ureaplasma parvum serovar 3 (strain ATCC 27815 / 27 / NCTC 11736).